A 669-amino-acid chain; its full sequence is DNA mismatch repair protein MutL (669 aa).

The interval 357–379 (EQRQNTENNQEKTFSSEESNSKS) is disordered. The segment covering 361-379 (NTENNQEKTFSSEESNSKS) has biased composition (polar residues).

The protein belongs to the DNA mismatch repair MutL/HexB family.

In terms of biological role, this protein is involved in the repair of mismatches in DNA. It is required for dam-dependent methyl-directed DNA mismatch repair. May act as a 'molecular matchmaker', a protein that promotes the formation of a stable complex between two or more DNA-binding proteins in an ATP-dependent manner without itself being part of a final effector complex. The protein is DNA mismatch repair protein MutL of Staphylococcus aureus (strain Mu3 / ATCC 700698).